Consider the following 62-residue polypeptide: Photosystem II reaction center protein Z (62 aa).

Methionine 1 bears the N-formylmethionine mark. Residues methionine 1–leucine 4 lie on the Lumenal side of the membrane. Residues phenylalanine 5 to valine 25 traverse the membrane as a helical segment. The Cytoplasmic segment spans residues alanine 26 to serine 36. Residues lysine 37–asparagine 58 form a helical membrane-spanning segment. Over phenylalanine 59–valine 62 the chain is Lumenal.

The protein belongs to the PsbZ family. In terms of assembly, PSII is composed of 1 copy each of membrane proteins PsbA, PsbB, PsbC, PsbD, PsbE, PsbF, PsbH, PsbI, PsbJ, PsbK, PsbL, PsbM, PsbT, PsbX, PsbY, PsbZ, Psb30/Ycf12, peripheral proteins PsbO, CyanoQ (PsbQ), PsbU, PsbV and a large number of cofactors. It forms dimeric complexes. Part of a photosystem II (PSII) assembly intermediate complex PSII-I; crystallized from a strain deleted of psbJ, it forms monomeric PSII before addition of the oxygen evolving complex. PSII-I includes 3 assembly factors not found in mature PSII (Psb27, Psb28 and Psb34). Requires PSII binds multiple chlorophylls, carotenoids and specific lipids. as cofactor.

The protein resides in the cellular thylakoid membrane. In terms of biological role, may control the interaction of photosystem II (PSII) cores with the light-harvesting antenna, regulates electron flow through the 2 photosystem reaction centers. PSII is a light-driven water plastoquinone oxidoreductase, using light energy to abstract electrons from H(2)O, generating a proton gradient subsequently used for ATP formation. May also aid in binding of PsbK, Psb30/Ycf12 and the oxygen-evolving complex to PSII, at least in vitro. The protein is Photosystem II reaction center protein Z of Thermosynechococcus vestitus (strain NIES-2133 / IAM M-273 / BP-1).